The following is a 133-amino-acid chain: Cytochrome c-type biogenesis protein CcmE (133 aa).

The Cytoplasmic portion of the chain corresponds to 1–7; it reads MKKKHKR. Residues 8–28 traverse the membrane as a helical; Signal-anchor for type II membrane protein segment; the sequence is LLITSGIFCFLSCIVFFILTT. Residues 29–133 are Periplasmic-facing; that stretch reads LKENISFFYT…YMPKVLKQIP (105 aa). Heme contacts are provided by H120 and Y124.

It belongs to the CcmE/CycJ family.

It localises to the cell inner membrane. Its function is as follows. Heme chaperone required for the biogenesis of c-type cytochromes. Transiently binds heme delivered by CcmC and transfers the heme to apo-cytochromes in a process facilitated by CcmF and CcmH. This chain is Cytochrome c-type biogenesis protein CcmE, found in Wolbachia sp. subsp. Drosophila simulans (strain wRi).